Consider the following 833-residue polypeptide: Patatin-like phospholipase domain-containing protein SNOG_00918 (833 aa).

Disordered stretches follow at residues 1 to 20 (MTDVKKESDGPEPYSSSAFD) and 49 to 71 (HLSPSTEDLTAPQPETGKFSANN). Residues 108-128 (WPLLVVVLGWLLFLSIAYVFT) traverse the membrane as a helical segment. One can recognise a PNPLA domain in the interval 301-457 (LCLSGGATFA…RTDIPLKALN (157 aa)). The short motif at 332–336 (GTSGG) is the GXSXG element. Residue S334 is the Nucleophile of the active site. D444 functions as the Proton acceptor in the catalytic mechanism. 2 disordered regions span residues 630–657 (TKSKSPSEEAIYPLSGSESSSSADFSRP) and 680–833 (LRTD…GKGL). Low complexity predominate over residues 644–655 (SGSESSSSADFS). Polar residues predominate over residues 689–707 (DTPNSPSLSARLTGWWNTK). Basic and acidic residues-rich tracts occupy residues 740-750 (RPPKEVRDLQA), 759-769 (RNSDFLEEIRR), and 782-794 (DEGRAGRYRRGDV). Residues 809–819 (EFGDNEGDGEE) show a composition bias toward acidic residues.

This sequence belongs to the PLPL family.

The protein localises to the membrane. In terms of biological role, probable lipid hydrolase. The polypeptide is Patatin-like phospholipase domain-containing protein SNOG_00918 (Phaeosphaeria nodorum (strain SN15 / ATCC MYA-4574 / FGSC 10173) (Glume blotch fungus)).